The chain runs to 296 residues: Probable endonuclease 4 (296 aa).

Zn(2+) is bound by residues His-68, His-109, Glu-144, Asp-178, His-181, His-213, Asp-226, His-228, and Glu-258.

It belongs to the AP endonuclease 2 family. Zn(2+) serves as cofactor.

It carries out the reaction Endonucleolytic cleavage to 5'-phosphooligonucleotide end-products.. Functionally, endonuclease IV plays a role in DNA repair. It cleaves phosphodiester bonds at apurinic or apyrimidinic (AP) sites, generating a 3'-hydroxyl group and a 5'-terminal sugar phosphate. The polypeptide is Probable endonuclease 4 (Staphylococcus epidermidis (strain ATCC 35984 / DSM 28319 / BCRC 17069 / CCUG 31568 / BM 3577 / RP62A)).